The chain runs to 339 residues: Anthranilate phosphoribosyltransferase (339 aa).

5-phospho-alpha-D-ribose 1-diphosphate-binding positions include Gly81, 84-85 (GD), Ser89, 91-94 (NVST), 109-117 (KHGNRALSS), and Ala121. Gly81 contributes to the anthranilate binding site. Residue Ser93 coordinates Mg(2+). Asn112 serves as a coordination point for anthranilate. Position 167 (Arg167) interacts with anthranilate. Asp226 and Glu227 together coordinate Mg(2+).

The protein belongs to the anthranilate phosphoribosyltransferase family. Homodimer. The cofactor is Mg(2+).

The enzyme catalyses N-(5-phospho-beta-D-ribosyl)anthranilate + diphosphate = 5-phospho-alpha-D-ribose 1-diphosphate + anthranilate. Its pathway is amino-acid biosynthesis; L-tryptophan biosynthesis; L-tryptophan from chorismate: step 2/5. In terms of biological role, catalyzes the transfer of the phosphoribosyl group of 5-phosphorylribose-1-pyrophosphate (PRPP) to anthranilate to yield N-(5'-phosphoribosyl)-anthranilate (PRA). The sequence is that of Anthranilate phosphoribosyltransferase from Rhodopseudomonas palustris (strain BisB18).